A 34-amino-acid chain; its full sequence is MRLRRLFKQPSTRVLGVTNCPRQQGHQKRREQPD.

A disordered region spans residues Met-1–Asp-34. Positions Gly-25 to Asp-34 are enriched in basic residues.

This is an uncharacterized protein from Schizosaccharomyces pombe (strain 972 / ATCC 24843) (Fission yeast).